Reading from the N-terminus, the 77-residue chain is RNA-binding protein Hfq (77 aa).

Residues D10–I70 form the Sm domain.

It belongs to the Hfq family. In terms of assembly, homohexamer.

Its function is as follows. RNA chaperone that binds small regulatory RNA (sRNAs) and mRNAs to facilitate mRNA translational regulation in response to envelope stress, environmental stress and changes in metabolite concentrations. Also binds with high specificity to tRNAs. This Cereibacter sphaeroides (strain ATCC 17029 / ATH 2.4.9) (Rhodobacter sphaeroides) protein is RNA-binding protein Hfq.